A 102-amino-acid polypeptide reads, in one-letter code: Small ribosomal subunit protein uS10 (102 aa).

The protein belongs to the universal ribosomal protein uS10 family. In terms of assembly, part of the 30S ribosomal subunit.

Functionally, involved in the binding of tRNA to the ribosomes. The protein is Small ribosomal subunit protein uS10 of Sulfurihydrogenibium sp. (strain YO3AOP1).